A 489-amino-acid polypeptide reads, in one-letter code: Betaine aldehyde dehydrogenase (489 aa).

K(+) contacts are provided by Thr26 and Asp93. 150–152 serves as a coordination point for NAD(+); the sequence is GAW. The active-site Charge relay system is the Lys162. Residue 176–179 participates in NAD(+) binding; sequence KPSE. Val180 is a K(+) binding site. NAD(+) is bound at residue 229–232; sequence GVET. Leu245 contacts K(+). Glu251 (proton acceptor) is an active-site residue. Residues Gly253, Cys285, and Glu386 each contribute to the NAD(+) site. The Nucleophile role is filled by Cys285. Position 285 is a cysteine sulfenic acid (-SOH) (Cys285). K(+)-binding residues include Lys456 and Gly459. Residue Glu463 is the Charge relay system of the active site.

It belongs to the aldehyde dehydrogenase family. As to quaternary structure, dimer of dimers. It depends on K(+) as a cofactor.

The enzyme catalyses betaine aldehyde + NAD(+) + H2O = glycine betaine + NADH + 2 H(+). The protein operates within amine and polyamine biosynthesis; betaine biosynthesis via choline pathway; betaine from betaine aldehyde: step 1/1. Functionally, involved in the biosynthesis of the osmoprotectant glycine betaine. Catalyzes the irreversible oxidation of betaine aldehyde to the corresponding acid. This is Betaine aldehyde dehydrogenase from Burkholderia orbicola (strain MC0-3).